We begin with the raw amino-acid sequence, 515 residues long: Bifunctional purine biosynthesis protein PurH (515 aa).

Residues 1–145 (MTKRALISVS…KNHASVTVVV (145 aa)) form the MGS-like domain.

It belongs to the PurH family.

It carries out the reaction (6R)-10-formyltetrahydrofolate + 5-amino-1-(5-phospho-beta-D-ribosyl)imidazole-4-carboxamide = 5-formamido-1-(5-phospho-D-ribosyl)imidazole-4-carboxamide + (6S)-5,6,7,8-tetrahydrofolate. The enzyme catalyses IMP + H2O = 5-formamido-1-(5-phospho-D-ribosyl)imidazole-4-carboxamide. The protein operates within purine metabolism; IMP biosynthesis via de novo pathway; 5-formamido-1-(5-phospho-D-ribosyl)imidazole-4-carboxamide from 5-amino-1-(5-phospho-D-ribosyl)imidazole-4-carboxamide (10-formyl THF route): step 1/1. It participates in purine metabolism; IMP biosynthesis via de novo pathway; IMP from 5-formamido-1-(5-phospho-D-ribosyl)imidazole-4-carboxamide: step 1/1. This Streptococcus uberis (strain ATCC BAA-854 / 0140J) protein is Bifunctional purine biosynthesis protein PurH.